Reading from the N-terminus, the 126-residue chain is Holo-[acyl-carrier-protein] synthase (126 aa).

The Mg(2+) site is built by aspartate 9 and glutamate 58.

The protein belongs to the P-Pant transferase superfamily. AcpS family. Mg(2+) serves as cofactor.

The protein resides in the cytoplasm. The catalysed reaction is apo-[ACP] + CoA = holo-[ACP] + adenosine 3',5'-bisphosphate + H(+). In terms of biological role, transfers the 4'-phosphopantetheine moiety from coenzyme A to a Ser of acyl-carrier-protein. The chain is Holo-[acyl-carrier-protein] synthase from Photorhabdus laumondii subsp. laumondii (strain DSM 15139 / CIP 105565 / TT01) (Photorhabdus luminescens subsp. laumondii).